A 410-amino-acid polypeptide reads, in one-letter code: D-3-phosphoglycerate dehydrogenase (410 aa).

Residues 161 to 162, aspartate 181, 238 to 240, and aspartate 264 contribute to the NAD(+) site; these read HI and ASR. The active site involves arginine 240. Glutamate 269 is a catalytic residue. The Proton donor role is filled by histidine 292. 292-295 contacts NAD(+); that stretch reads HIGG. One can recognise an ACT domain in the interval 339-410; the sequence is RLMHIHENRP…PGTIRARLLY (72 aa).

Belongs to the D-isomer specific 2-hydroxyacid dehydrogenase family. Homotetramer.

It carries out the reaction (2R)-3-phosphoglycerate + NAD(+) = 3-phosphooxypyruvate + NADH + H(+). The enzyme catalyses (R)-2-hydroxyglutarate + NAD(+) = 2-oxoglutarate + NADH + H(+). It participates in amino-acid biosynthesis; L-serine biosynthesis; L-serine from 3-phospho-D-glycerate: step 1/3. In bacteria displays feedback inhibition by L-serine. Catalyzes the reversible oxidation of 3-phospho-D-glycerate to 3-phosphonooxypyruvate, the first step of the phosphorylated L-serine biosynthesis pathway. Also catalyzes the reversible oxidation of 2-hydroxyglutarate to 2-oxoglutarate. The protein is D-3-phosphoglycerate dehydrogenase (serA) of Escherichia coli O6:H1 (strain CFT073 / ATCC 700928 / UPEC).